Reading from the N-terminus, the 295-residue chain is Protoheme IX farnesyltransferase 2 (295 aa).

9 helical membrane-spanning segments follow: residues 9–29 (ITKP…FFLA), 36–56 (LAIF…GCVF), 85–105 (VALV…YYVA), 108–128 (LAAL…SLYL), 135–155 (GTLV…VAVS), 163–183 (LTLL…IAIF), 209–229 (ILLY…SGYA), 230–250 (GMSY…MAWT), and 263–283 (KLFV…SVDF).

It belongs to the UbiA prenyltransferase family. Protoheme IX farnesyltransferase subfamily.

The protein resides in the cell inner membrane. It carries out the reaction heme b + (2E,6E)-farnesyl diphosphate + H2O = Fe(II)-heme o + diphosphate. It functions in the pathway porphyrin-containing compound metabolism; heme O biosynthesis; heme O from protoheme: step 1/1. Its function is as follows. Converts heme B (protoheme IX) to heme O by substitution of the vinyl group on carbon 2 of heme B porphyrin ring with a hydroxyethyl farnesyl side group. The chain is Protoheme IX farnesyltransferase 2 from Pseudomonas fluorescens (strain ATCC BAA-477 / NRRL B-23932 / Pf-5).